The primary structure comprises 273 residues: Shikimate dehydrogenase (NADP(+)) (273 aa).

Shikimate-binding positions include serine 15–serine 17 and threonine 62. The active-site Proton acceptor is the lysine 66. Aspartate 78 is a binding site for NADP(+). Residues asparagine 87 and aspartate 103 each coordinate shikimate. NADP(+) contacts are provided by residues glycine 127–alanine 131, asparagine 150–arginine 155, and methionine 214. Position 216 (tyrosine 216) interacts with shikimate. Glycine 238 is an NADP(+) binding site.

Belongs to the shikimate dehydrogenase family. Homodimer.

The enzyme catalyses shikimate + NADP(+) = 3-dehydroshikimate + NADPH + H(+). It functions in the pathway metabolic intermediate biosynthesis; chorismate biosynthesis; chorismate from D-erythrose 4-phosphate and phosphoenolpyruvate: step 4/7. Functionally, involved in the biosynthesis of the chorismate, which leads to the biosynthesis of aromatic amino acids. Catalyzes the reversible NADPH linked reduction of 3-dehydroshikimate (DHSA) to yield shikimate (SA). The sequence is that of Shikimate dehydrogenase (NADP(+)) from Yersinia enterocolitica serotype O:8 / biotype 1B (strain NCTC 13174 / 8081).